The following is a 360-amino-acid chain: Ribosomal RNA small subunit methyltransferase C (360 aa).

The protein belongs to the methyltransferase superfamily. RsmC family. Monomer.

It localises to the cytoplasm. It carries out the reaction guanosine(1207) in 16S rRNA + S-adenosyl-L-methionine = N(2)-methylguanosine(1207) in 16S rRNA + S-adenosyl-L-homocysteine + H(+). Specifically methylates the guanine in position 1207 of 16S rRNA in the 30S particle. The sequence is that of Ribosomal RNA small subunit methyltransferase C from Alteromonas mediterranea (strain DSM 17117 / CIP 110805 / LMG 28347 / Deep ecotype).